The primary structure comprises 492 residues: Octanoyltransferase (492 aa).

The tract at residues 1–255 (MRCILLGSGT…GYDGLEAIID (255 aa)) is unknown. The lipB domain stretch occupies residues 256 to 492 (EKGIRIKDFE…AVFRRNFGAL (237 aa)). One can recognise a BPL/LPL catalytic domain in the interval 305-492 (RKPQNTLLFC…AVFRRNFGAL (188 aa)). Residues 350-357 (RGGDITYH), 423-425 (AIG), and 436-438 (GFA) contribute to the substrate site. Catalysis depends on cysteine 454, which acts as the Acyl-thioester intermediate.

In the C-terminal section; belongs to the LipB family.

It is found in the cytoplasm. It catalyses the reaction octanoyl-[ACP] + L-lysyl-[protein] = N(6)-octanoyl-L-lysyl-[protein] + holo-[ACP] + H(+). The protein operates within protein modification; protein lipoylation via endogenous pathway; protein N(6)-(lipoyl)lysine from octanoyl-[acyl-carrier-protein]: step 1/2. Catalyzes the transfer of endogenously produced octanoic acid from octanoyl-acyl-carrier-protein onto the lipoyl domains of lipoate-dependent enzymes. Lipoyl-ACP can also act as a substrate although octanoyl-ACP is likely to be the physiological substrate. This is Octanoyltransferase from Porphyromonas gingivalis (strain ATCC BAA-308 / W83).